The chain runs to 490 residues: Thyroid hormone receptor alpha (490 aa).

The tract at residues 1-32 is disordered; it reads MEQKPSKVECGSDPEENSARSPDGKRKRKNGQ. The interval 1 to 52 is modulating; that stretch reads MEQKPSKVECGSDPEENSARSPDGKRKRKNGQCSLKTSMSGYIPSYLDKDEQ. C53, C56, C70, C73, C91, C97, C107, and C110 together coordinate Zn(2+). 2 NR C4-type zinc fingers span residues 53-73 and 91-115; these read CVVC…CEGC and CKYD…FKKC. Residues 53–127 constitute a DNA-binding region (nuclear receptor); that stretch reads CVVCGDKATG…VGMAMDLVLD (75 aa). The NR LBD domain maps to 163–407; that stretch reads EEWDLIHIAT…EGQQLLGMHV (245 aa). 3,3',5-triiodo-L-thyronine-binding residues include R228 and S277. The segment at 457–490 is disordered; that stretch reads AVCGEDDSSEADSPSSSEEEPEVCEDLAGNAASP.

It belongs to the nuclear hormone receptor family. NR1 subfamily. Binds DNA as a dimer; homodimer and heterodimer with RXRB. Interacts with NCOA3 and NCOA6 coactivators, leading to a strong increase of transcription of target genes. Probably interacts with SFPQ. Interacts with C1D. Interacts with AKAP13. Interacts with TP53INP2. Interacts with PER2. Isoform alpha-2 and isoform alpha-1 interact with TACC1, but the interaction with alpha-1 is weaker. The interaction with isoform alpha-1, but not alpha-2, is decreased in the presence of thyroid hormone T3.

The protein localises to the nucleus. It localises to the cytoplasm. Nuclear hormone receptor that can act as a repressor or activator of transcription. High affinity receptor for thyroid hormones, including triiodothyronine and thyroxine. In terms of biological role, does not bind thyroid hormone and functions as a weak dominant negative inhibitor of thyroid hormone action. The chain is Thyroid hormone receptor alpha (THRA) from Homo sapiens (Human).